A 240-amino-acid polypeptide reads, in one-letter code: Ribosomal RNA small subunit methyltransferase G (240 aa).

S-adenosyl-L-methionine is bound by residues Gly80, Phe85, 131–132 (AE), and Arg150.

It belongs to the methyltransferase superfamily. RNA methyltransferase RsmG family.

The protein localises to the cytoplasm. In terms of biological role, specifically methylates the N7 position of a guanine in 16S rRNA. The chain is Ribosomal RNA small subunit methyltransferase G from Dictyoglomus thermophilum (strain ATCC 35947 / DSM 3960 / H-6-12).